A 1761-amino-acid chain; its full sequence is MTSTPATSLGDMDHEYNQDDIAIIGMACRLAGGIQSIEQFWNAILSKKDASGEIPEMRWEPYFRRDSRNAEILKKTTSRGYFLDRLENFDASFFGISPLEAELMDPQQRIALEVTWEALEHAGISVTSLAGSDTAVFMGVNSDDYSRLLLEDVPGVEAWMGIGTAFCGIPNRISYTLDLHGPSTAVDAACASGLVAVHHGRQALLAGESKLAIVGGVNALIGPGLTRVLDEAGAVTPEGRCRSFDDSASGYGRGEGASVLVLKRLSEAIIDGDKVLAVLKGSAVGQDGKTNGIMSPNQVAQEEVARKALSVARVDPLSVAFVEAHATSTPVGDPCEVAAIASVYGSGAGRPKDLPCKIGSVKPNVGHLEAGAGSTSLIKAVLAVSNGIFPPQANFQTPNRKMDWDNNSLEVIRGVSDWVQDRKRAGICSYGYGGTVAHAVIEQAPAPNFGPEDQVGDVVYADAAPYLLFWSAPQSQRLRETAAQLASWVGETEQPLADIANTLAYRRSQHQHRCAVVADNREEAVKLLELGSQNADSPWMIKEKVSNYGKKGAVWVFSGHGAHWTDMGKELLASEPAFYGAVSSIDNIVRDILNFSPLEALENGDLKTTDKQQVLTYAMQVGLSAVLRSKGAQPAAVIGHSVGEIAASVTAGCLTIQEGAFIVSQRAKLYRLVAGRGAMILVDLSPEDAVKELEEQGQTGAVAVAIHSSPNTCVLSGGIEAINELEQSLKDKHIQARRVKTDVAFHSPVLNELAEPLLELISGHIKPQQPKIRLYSTSLTQARGDNLRDEKYWIDNMIQPVLLTNAVKAALEDDFGIFLEVSSHPIIAHSINETIIEADSDGVIFPTLRRDKPSRKCILFALGKLHCHGAPIDLRANFSGDWTRDVPTTVWKHNPFWRKVGTGSLQPNKSVTHDVKSHVLLGAKHQVVGSDTTMWTTTLDESTRPFPGSHPLHGTEIVPAAVLLNTFLHTGEEYNALKDVILRVPVAMSAPRNIQIVKEQGRVRIVSRLQASEGENNNTESSWLTHTTGHVANNEWSKSSLDISATKKKLPSVKPSFATDYLASVGVPDMGFPWKVTEHYGEGDEMLSRVDTAPESSEKSIPWDVSSWAPILDAATSIGSSIFYKEPVLRMPAQIDEVAITPGSIPKVAYIHTTVETGMWRVNVAILNEEGHEVAHINGMRFSAVEGTPGASGSVESLVHQMSWPPAKLEEEGFQLKNVVFVSEQSDRVAAYIQDLQKRKVSTTVVPNPAGLEEQNLSSEGTIVAYLPSGSDLEEDTAKFSSTFCSEVLDIAKLLVNQKSPSKLWCITQGLFEAFSPSSLSQGPLVGLSRIIASEHPEVWGGLVDTDDESFPLQAVKYVKSVDVISVRDSVARVARLRPVPRSKIVTGREKTFTPTAEGTYLITGGLGALGLETAKWMVESGARRLILVSRRGLPPRRKWVDSNDDSAISTIRKLERLGASIHVVAADISKPDGAERLEQALDLLDLPSISGVVHAAGVLEDQLVAETTKESFDRVLAPKVSGAMALHQLFPPKTLEFFVLFSSCGQLLGFPGQASYASGNAFLDTFADFRRNQGDNIVSFLWTSWNGLGMASSTEYINAELEAKGITSVSRDEAFRAWEHAIKHDIHQAVVLRALPVEENGIPPLPILDEIAPRKRAESSGTEAVSKGEVSEKAPVPKSGPELKEYLQNAISECVAKTLRLPSAADVDPSTALTEMGMDSVMTVSLRKHLQTSLKVTVPPTLIWGHPTVNHLVKWFEEKI.

One can recognise a Ketosynthase family 3 (KS3) domain in the interval 18-443 (QDDIAIIGMA…GTVAHAVIEQ (426 aa)). Active-site for beta-ketoacyl synthase activity residues include cysteine 190, histidine 325, and histidine 367. A malonyl-CoA:ACP transacylase (MAT) domain region spans residues 554 to 870 (VWVFSGHGAH…ALGKLHCHGA (317 aa)). The For malonyltransferase activity role is filled by serine 641. The segment at 918-1038 (HVLLGAKHQV…GHVANNEWSK (121 aa)) is N-terminal hotdog fold. Positions 918-1187 (HVLLGAKHQV…NGMRFSAVEG (270 aa)) are dehydratase (DH) domain. Positions 918-1191 (HVLLGAKHQV…FSAVEGTPGA (274 aa)) constitute a PKS/mFAS DH domain. Histidine 950 serves as the catalytic Proton acceptor; for dehydratase activity. A C-terminal hotdog fold region spans residues 1050 to 1191 (LPSVKPSFAT…FSAVEGTPGA (142 aa)). Aspartate 1113 functions as the Proton donor; for dehydratase activity in the catalytic mechanism. The ketoreductase (KR) domain stretch occupies residues 1399 to 1587 (GTYLITGGLG…IVSFLWTSWN (189 aa)). Residues 1654–1680 (PRKRAESSGTEAVSKGEVSEKAPVPKS) form a disordered region. Positions 1686-1761 (EYLQNAISEC…HLVKWFEEKI (76 aa)) constitute a Carrier domain. An O-(pantetheine 4'-phosphoryl)serine modification is found at serine 1721.

It catalyses the reaction 3 malonyl-CoA + acetyl-CoA + NADPH + 3 H(+) = 6-methylsalicylate + 3 CO2 + NADP(+) + 4 CoA + H2O. The protein operates within secondary metabolite biosynthesis; terpenoid biosynthesis. Its function is as follows. 6-methylsalicylic acid synthase; part of the gene cluster that mediates the biosynthesis of sesquiterpenyl epoxy-cyclohexenoids (SECs) such as anthrobotrisins and arthrosporols, metabolites that possess a novel hybrid carbon skeleton consisting of a polyketide-derived epoxycyclohexenol combined with a terpenoid-derived monocyclic sesquiterpenol substructure (PKS-PTS hybrid). The SEC pathway plays an important role for fungal soil colonization via decreasing fungal nematode-capturing ability. Within the pathway, the polyketide synthase (PKS) AOL_s00215g283 catalyzes the biosynthesis of 6-methylsalicylic acid (6-MSA) via condensation of 1 acetate and 3 malonate units. AOL_s00215g283 performs a series of programmed reactions including Claisen condensation, dehydration, reduction, and cyclization to yield 6-MSA. The pathway begins with the biosynthesis of 6-methylsalicylic acid (6-MSA), the first precursor of the polyketide-derived epoxycyclohexenol in arthrosporols, by the polyketide synthase (PKS) AOL_s00215g283. The 6-methylsalicylic acid decarboxylase AOL_s00215g281 then catalyzes the decarboxylation of 6-methylsalicylic acid to yield m-cresol. The cytochrome P450 monooxygenase AOL_s00215g282 further oxidizes m-cresol to yield toluquinol. With the assistance of the oxidoreductase AOL_s00215g277, the polyprenyl transferase AOL_s00215g276 catalyzes the farnesylation of toluquinol to produce farnesyl hydroquinone, the hybrid precursor for biosynthesis of SECs. Farnesyl hydroquinone undergoes epoxidation and then subsequent dehydrogenation to form farnesyl epoxy-quinone, the first and simplest SEC. The cytochrome P450 monooxygenase AOL_s00215g278 and the FAD-dependent monooxygenase AOL_s00215g279 might be involved in the oxygenation of the phenol moiety, most likely in the epoxy formation. The cytochrome P450 monooxygenases AOL_s00215g274 and AOL_s00215g280 are involved in specific regional ketone reductions at respectively C-4 and C-1 of farnesyl epoxy-quinone PubMed:33823587. This chain is 6-methylsalicylic acid synthase AOL_s00215g283, found in Arthrobotrys oligospora (strain ATCC 24927 / CBS 115.81 / DSM 1491) (Nematode-trapping fungus).